Here is a 393-residue protein sequence, read N- to C-terminus: Cell division protein FtsZ 2 (393 aa).

Residues 1–28 (MQDIVQDALDNAEAEQREMDGDGDGDEF) form a disordered region. Residues 40–44 (GAGNN), 127–129 (GTG), Glu158, Arg161, and Asp204 contribute to the GTP site. Positions 339–393 (GPSTQKQADKSRRELQDVDSKQRAADDAGAGGFGGAHSDGGQDEVEQENGLDVIR) are disordered. Residues 345–364 (QADKSRRELQDVDSKQRAAD) show a composition bias toward basic and acidic residues. The segment covering 367–376 (GAGGFGGAHS) has biased composition (gly residues).

Belongs to the FtsZ family. In terms of assembly, homodimer. Polymerizes to form a dynamic ring structure in a strictly GTP-dependent manner. Interacts directly with several other division proteins.

It is found in the cytoplasm. Essential cell division protein that forms a contractile ring structure (Z ring) at the future cell division site. The regulation of the ring assembly controls the timing and the location of cell division. One of the functions of the FtsZ ring is to recruit other cell division proteins to the septum to produce a new cell wall between the dividing cells. Binds GTP and shows GTPase activity. Overexpression causes significant changes in cell morphology. This chain is Cell division protein FtsZ 2, found in Halobacterium salinarum (strain ATCC 29341 / DSM 671 / R1).